The sequence spans 122 residues: Basic phospholipase A2 F16 (122 aa).

7 disulfides stabilise this stretch: Cys26-Cys115, Cys28-Cys44, Cys43-Cys95, Cys49-Cys122, Cys50-Cys88, Cys57-Cys81, and Cys75-Cys86. Residues Tyr27, Gly29, and Gly31 each contribute to the Ca(2+) site. His47 is a catalytic residue. A Ca(2+)-binding site is contributed by Asp48. The active site involves Asp89.

It belongs to the phospholipase A2 family. Group II subfamily. D49 sub-subfamily. The cofactor is Ca(2+). In terms of tissue distribution, expressed by the venom gland.

It localises to the secreted. The catalysed reaction is a 1,2-diacyl-sn-glycero-3-phosphocholine + H2O = a 1-acyl-sn-glycero-3-phosphocholine + a fatty acid + H(+). With respect to regulation, pre-incubation with heparin markedly reduces the neurotoxicity of this toxin. Functionally, snake venom phospholipase A2 (PLA2) that produces neuromuscular blockade in chick biventer cervicis preparations in the absence and presence of crotapotin. In contrast, in mouse phrenic nerve-diaphragm preparations, the neuromuscular blockade is dependent on crotapotin. PLA2 catalyzes the calcium-dependent hydrolysis of the 2-acyl groups in 3-sn-phosphoglycerides. The chain is Basic phospholipase A2 F16 from Crotalus durissus terrificus (South American rattlesnake).